Reading from the N-terminus, the 425-residue chain is UPF0761 membrane protein XCV0968 (425 aa).

Transmembrane regions (helical) follow at residues 48–68 (VFALVPLAIVVFGVLSAFPAF), 105–125 (FTVAGMVALVASLLITLHSIE), 154–174 (GTMLAAASMAMAAYVFALPLF), 182–202 (LAEFAWRLAPMAVEFVCIVLI), 216–236 (ALPGALLAVILMEIVKWGFGF), and 250–270 (ALSALPILLLWIYLSWVSVLL).

The protein belongs to the UPF0761 family.

It is found in the cell inner membrane. This chain is UPF0761 membrane protein XCV0968, found in Xanthomonas euvesicatoria pv. vesicatoria (strain 85-10) (Xanthomonas campestris pv. vesicatoria).